The chain runs to 329 residues: Telomeric repeat-binding factor 2-interacting protein 1 (329 aa).

A BRCT domain is found at 63–86 (AVSTDYVVACVESQRRLPLDLYRH). Residues 94-153 (ASPRGRLPFTEAEDAALLRAVRERSGAPRVSGTALWKELECTGLTRHSWQAMRDRYLRHL) enclose the Myb-like domain. A disordered region spans residues 179 to 206 (EFESSESGSDTSDTPDELPLQNGEGTFP). Residues 313–329 (AKFGAENVARRVAFRKS) carry the Nuclear localization signal motif.

This sequence belongs to the RAP1 family. Homodimer. Component of the shelterin complex (telosome). Interacts with terf2; the interaction is direct.

The protein localises to the nucleus. Its subcellular location is the chromosome. The protein resides in the telomere. Acts both as a regulator of telomere function and as a transcription regulator. Involved in the regulation of telomere length and protection as a component of the shelterin complex (telosome). Does not bind DNA directly: recruited to telomeric double-stranded 5'-TTAGGG-3' repeats via its interaction with terf2. Independently of its function in telomeres, also acts as a transcription regulator: recruited to extratelomeric 5'-TTAGGG-3' sites via its association with terf2 or other factors, and regulates gene expression. The polypeptide is Telomeric repeat-binding factor 2-interacting protein 1 (TERF2IP) (Gallus gallus (Chicken)).